Here is a 133-residue protein sequence, read N- to C-terminus: ATP synthase epsilon chain, chloroplastic (133 aa).

This sequence belongs to the ATPase epsilon chain family. In terms of assembly, F-type ATPases have 2 components, CF(1) - the catalytic core - and CF(0) - the membrane proton channel. CF(1) has five subunits: alpha(3), beta(3), gamma(1), delta(1), epsilon(1). CF(0) has three main subunits: a, b and c.

Its subcellular location is the plastid. The protein localises to the chloroplast thylakoid membrane. Functionally, produces ATP from ADP in the presence of a proton gradient across the membrane. The polypeptide is ATP synthase epsilon chain, chloroplastic (Piper cenocladum (Ant piper)).